Reading from the N-terminus, the 289-residue chain is Acetyl-coenzyme A carboxylase carboxyl transferase subunit beta (289 aa).

Residues 30–289 (IWRECPRCHS…SNAWRANHDK (260 aa)) enclose the CoA carboxyltransferase N-terminal domain. Residues Cys-34, Cys-37, Cys-52, and Cys-55 each contribute to the Zn(2+) site. The C4-type zinc-finger motif lies at 34–55 (CPRCHSRFYYRRFGNFDVCPEC).

This sequence belongs to the AccD/PCCB family. Acetyl-CoA carboxylase is a heterohexamer composed of biotin carboxyl carrier protein (AccB), biotin carboxylase (AccC) and two subunits each of ACCase subunit alpha (AccA) and ACCase subunit beta (AccD). Zn(2+) is required as a cofactor.

It localises to the cytoplasm. The catalysed reaction is N(6)-carboxybiotinyl-L-lysyl-[protein] + acetyl-CoA = N(6)-biotinyl-L-lysyl-[protein] + malonyl-CoA. The protein operates within lipid metabolism; malonyl-CoA biosynthesis; malonyl-CoA from acetyl-CoA: step 1/1. In terms of biological role, component of the acetyl coenzyme A carboxylase (ACC) complex. Biotin carboxylase (BC) catalyzes the carboxylation of biotin on its carrier protein (BCCP) and then the CO(2) group is transferred by the transcarboxylase to acetyl-CoA to form malonyl-CoA. The chain is Acetyl-coenzyme A carboxylase carboxyl transferase subunit beta from Oenococcus oeni (strain ATCC BAA-331 / PSU-1).